The primary structure comprises 156 residues: 6,7-dimethyl-8-ribityllumazine synthase (156 aa).

5-amino-6-(D-ribitylamino)uracil-binding positions include Phe-23, Ala-57–Glu-59, and Thr-81–Ile-83. Position 86–87 (Ser-86–Thr-87) interacts with (2S)-2-hydroxy-3-oxobutyl phosphate. The active-site Proton donor is His-89. Position 114 (Phe-114) interacts with 5-amino-6-(D-ribitylamino)uracil. Residue Arg-128 participates in (2S)-2-hydroxy-3-oxobutyl phosphate binding.

The protein belongs to the DMRL synthase family. Forms an icosahedral capsid composed of 60 subunits, arranged as a dodecamer of pentamers.

The catalysed reaction is (2S)-2-hydroxy-3-oxobutyl phosphate + 5-amino-6-(D-ribitylamino)uracil = 6,7-dimethyl-8-(1-D-ribityl)lumazine + phosphate + 2 H2O + H(+). It participates in cofactor biosynthesis; riboflavin biosynthesis; riboflavin from 2-hydroxy-3-oxobutyl phosphate and 5-amino-6-(D-ribitylamino)uracil: step 1/2. Its function is as follows. Catalyzes the formation of 6,7-dimethyl-8-ribityllumazine by condensation of 5-amino-6-(D-ribitylamino)uracil with 3,4-dihydroxy-2-butanone 4-phosphate. This is the penultimate step in the biosynthesis of riboflavin. This Shouchella clausii (strain KSM-K16) (Alkalihalobacillus clausii) protein is 6,7-dimethyl-8-ribityllumazine synthase.